The sequence spans 258 residues: Deoxyribose-phosphate aldolase (258 aa).

Catalysis depends on Asp-102, which acts as the Proton donor/acceptor. The Schiff-base intermediate with acetaldehyde role is filled by Lys-165. Catalysis depends on Lys-199, which acts as the Proton donor/acceptor.

Belongs to the DeoC/FbaB aldolase family. DeoC type 2 subfamily.

The protein localises to the cytoplasm. It carries out the reaction 2-deoxy-D-ribose 5-phosphate = D-glyceraldehyde 3-phosphate + acetaldehyde. It participates in carbohydrate degradation; 2-deoxy-D-ribose 1-phosphate degradation; D-glyceraldehyde 3-phosphate and acetaldehyde from 2-deoxy-alpha-D-ribose 1-phosphate: step 2/2. Functionally, catalyzes a reversible aldol reaction between acetaldehyde and D-glyceraldehyde 3-phosphate to generate 2-deoxy-D-ribose 5-phosphate. The protein is Deoxyribose-phosphate aldolase of Aliivibrio fischeri (strain MJ11) (Vibrio fischeri).